A 552-amino-acid chain; its full sequence is Dihydroxy-acid dehydratase (552 aa).

Mg(2+) is bound at residue D78. C119 provides a ligand contact to [2Fe-2S] cluster. D120 and K121 together coordinate Mg(2+). An N6-carboxylysine modification is found at K121. C191 provides a ligand contact to [2Fe-2S] cluster. Mg(2+) is bound at residue E442. S468 serves as the catalytic Proton acceptor.

Belongs to the IlvD/Edd family. As to quaternary structure, homodimer. It depends on [2Fe-2S] cluster as a cofactor. Mg(2+) serves as cofactor.

The enzyme catalyses (2R)-2,3-dihydroxy-3-methylbutanoate = 3-methyl-2-oxobutanoate + H2O. It carries out the reaction (2R,3R)-2,3-dihydroxy-3-methylpentanoate = (S)-3-methyl-2-oxopentanoate + H2O. It functions in the pathway amino-acid biosynthesis; L-isoleucine biosynthesis; L-isoleucine from 2-oxobutanoate: step 3/4. It participates in amino-acid biosynthesis; L-valine biosynthesis; L-valine from pyruvate: step 3/4. Functions in the biosynthesis of branched-chain amino acids. Catalyzes the dehydration of (2R,3R)-2,3-dihydroxy-3-methylpentanoate (2,3-dihydroxy-3-methylvalerate) into 2-oxo-3-methylpentanoate (2-oxo-3-methylvalerate) and of (2R)-2,3-dihydroxy-3-methylbutanoate (2,3-dihydroxyisovalerate) into 2-oxo-3-methylbutanoate (2-oxoisovalerate), the penultimate precursor to L-isoleucine and L-valine, respectively. The protein is Dihydroxy-acid dehydratase of Ruminiclostridium cellulolyticum (strain ATCC 35319 / DSM 5812 / JCM 6584 / H10) (Clostridium cellulolyticum).